The following is a 96-amino-acid chain: Co-chaperonin GroES (96 aa).

It belongs to the GroES chaperonin family. In terms of assembly, heptamer of 7 subunits arranged in a ring. Interacts with the chaperonin GroEL.

The protein localises to the cytoplasm. Together with the chaperonin GroEL, plays an essential role in assisting protein folding. The GroEL-GroES system forms a nano-cage that allows encapsulation of the non-native substrate proteins and provides a physical environment optimized to promote and accelerate protein folding. GroES binds to the apical surface of the GroEL ring, thereby capping the opening of the GroEL channel. In Neisseria meningitidis serogroup B (strain ATCC BAA-335 / MC58), this protein is Co-chaperonin GroES.